Consider the following 251-residue polypeptide: 3-deoxy-manno-octulosonate cytidylyltransferase (251 aa).

This sequence belongs to the KdsB family.

It is found in the cytoplasm. The enzyme catalyses 3-deoxy-alpha-D-manno-oct-2-ulosonate + CTP = CMP-3-deoxy-beta-D-manno-octulosonate + diphosphate. Its pathway is nucleotide-sugar biosynthesis; CMP-3-deoxy-D-manno-octulosonate biosynthesis; CMP-3-deoxy-D-manno-octulosonate from 3-deoxy-D-manno-octulosonate and CTP: step 1/1. It participates in bacterial outer membrane biogenesis; lipopolysaccharide biosynthesis. Its function is as follows. Activates KDO (a required 8-carbon sugar) for incorporation into bacterial lipopolysaccharide in Gram-negative bacteria. The protein is 3-deoxy-manno-octulosonate cytidylyltransferase of Chelativorans sp. (strain BNC1).